Reading from the N-terminus, the 249-residue chain is Type I iodothyronine deiodinase (249 aa).

Over 1–12 the chain is Extracellular; it reads MELPLPGLWLKR. The helical; Signal-anchor for type III membrane protein transmembrane segment at 13–33 threads the bilayer; it reads LWVLFQVALHVAMGKVLMTLF. Topologically, residues 34–249 are cytoplasmic; the sequence is PGRVKQDILA…VRAVLEKLHS (216 aa). Selenocysteine 126 is an active-site residue. Selenocysteine 126 is a non-standard amino acid (selenocysteine).

It belongs to the iodothyronine deiodinase family. As to quaternary structure, predominantly monomer. Can form homodimers but homodimerization is not essential for enzyme activity.

Its subcellular location is the cell membrane. The protein localises to the endoplasmic reticulum membrane. It is found in the basolateral cell membrane. The enzyme catalyses 3,3',5-triiodo-L-thyronine + iodide + A + H(+) = L-thyroxine + AH2. The catalysed reaction is 3,3',5'-triiodo-L-thyronine + iodide + A + H(+) = L-thyroxine + AH2. It catalyses the reaction 3,3'-diiodo-L-thyronine + iodide + A + H(+) = 3,3',5'-triiodo-L-thyronine + AH2. It carries out the reaction 3,3'-diiodo-L-thyronine + iodide + A + H(+) = 3,3',5-triiodo-L-thyronine + AH2. The enzyme catalyses 3'-iodo-L-thyronine + iodide + A + H(+) = 3',5'-diiodo-L-thyronine + AH2. The catalysed reaction is 3-iodo-L-thyronine + iodide + A + H(+) = 3,5-diiodo-L-thyronine + AH2. It catalyses the reaction 3-iodo-L-thyronine + iodide + A + H(+) = 3,3'-diiodo-L-thyronine + AH2. It carries out the reaction 3,3'-diiodothyronamine + iodide + A + H(+) = 3,3',5'-triiodothyronamine + AH2. The enzyme catalyses 3'-iodothyronamine + iodide + A + H(+) = 3',5'-diiodothyronamine + AH2. The catalysed reaction is 3-iodothyronamine + iodide + A + H(+) = 3,3'-diiodothyronamine + AH2. It catalyses the reaction 3,3'-diiodothyronamine + iodide + A + H(+) = 3,3',5-triiodothyronamine + AH2. It carries out the reaction 3-iodothyronamine + iodide + A + H(+) = 3,5-diiodothyronamine + AH2. The enzyme catalyses 3,3'-diiodo-L-thyronine sulfate + iodide + A + H(+) = 3,3',5'-triiodo-L-thyronine sulfate + AH2. The catalysed reaction is 3,3',5'-triiodo-L-thyronine sulfate + iodide + A + H(+) = L-thyroxine sulfate + AH2. It catalyses the reaction 3,3'-diiodo-L-thyronine sulfate + iodide + A + H(+) = 3,3',5-triiodo-L-thyronine sulfate + AH2. Plays a crucial role in the metabolism of thyroid hormones (TH) and has specific roles in TH activation and inactivation by deiodination. Catalyzes the deiodination of L-thyroxine (T4) to 3,5,3'-triiodothyronine (T3) and 3,3',5'-triiodothyronine (rT3) to 3,3'-diiodothyronine (3,3'-T2) via outer-ring deiodination (ORD). Catalyzes the deiodination of T4 to rT3, T3 to 3,3'-T2, 3,5-diiodothyronine (3,5-T2) to 3-monoiodothyronine (3-T1) and 3,3'-T2 to 3-T1 via inner-ring deiodination (IRD). Catalyzes the deiodination of 3',5'-diiodothyronine (3',5'-T2) to 3'-monoiodothyronine (3'-T1) via ORD. Catalyzes the phenolic ring deiodinations of 3,3',5'-triiodothyronamine, 3',5'-diiodothyronamine and 3,3'-diiodothyronamine as well as tyrosyl ring deiodinations of 3,5,3'-triiodothyronamine and 3,5-diiodothyronamine. Catalyzes the deiodination of L-thyroxine sulfate and 3,3',5-triiodo-L-thyronine sulfate via IRD and of 3,3',5'-triiodo-L-thyronine sulfate via ORD. This chain is Type I iodothyronine deiodinase (DIO1), found in Sus scrofa (Pig).